We begin with the raw amino-acid sequence, 469 residues long: 2-oxoisovalerate dehydrogenase subunit beta, mitochondrial (469 aa).

The N-terminal 40 residues, 1 to 40, are a transit peptide targeting the mitochondrion; the sequence is MKRSTVVIRPSARALSRQASSQSFLLARSSALTSRQRRLY. A thiamine diphosphate-binding site is contributed by Y167. 3 residues coordinate K(+): G194, L196, and T197.

Heterotetramer of 2 alpha and 2 beta chains. It depends on thiamine diphosphate as a cofactor.

The protein localises to the mitochondrion matrix. It catalyses the reaction N(6)-[(R)-lipoyl]-L-lysyl-[protein] + 3-methyl-2-oxobutanoate + H(+) = N(6)-[(R)-S(8)-2-methylpropanoyldihydrolipoyl]-L-lysyl-[protein] + CO2. The branched-chain alpha-keto dehydrogenase complex catalyzes the overall conversion of alpha-keto acids to acyl-CoA and CO(2). It contains multiple copies of three enzymatic components: branched-chain alpha-keto acid decarboxylase (E1), lipoamide acyltransferase (E2) and lipoamide dehydrogenase (E3). This Chaetomium thermophilum (strain DSM 1495 / CBS 144.50 / IMI 039719) (Thermochaetoides thermophila) protein is 2-oxoisovalerate dehydrogenase subunit beta, mitochondrial.